Here is a 250-residue protein sequence, read N- to C-terminus: 5'-nucleotidase SurE (250 aa).

Residues Asp8, Asp9, Ser39, and Asn95 each contribute to the a divalent metal cation site.

Belongs to the SurE nucleotidase family. The cofactor is a divalent metal cation.

Its subcellular location is the cytoplasm. It carries out the reaction a ribonucleoside 5'-phosphate + H2O = a ribonucleoside + phosphate. Its function is as follows. Nucleotidase that shows phosphatase activity on nucleoside 5'-monophosphates. The polypeptide is 5'-nucleotidase SurE (Syntrophobacter fumaroxidans (strain DSM 10017 / MPOB)).